The sequence spans 134 residues: Arginine decarboxylase proenzyme (134 aa).

Catalysis depends on Ser-82, which acts as the Schiff-base intermediate with substrate; via pyruvic acid. Pyruvic acid (Ser); by autocatalysis is present on Ser-82. The Proton acceptor; for processing activity role is filled by His-87. Cys-102 (proton donor; for catalytic activity) is an active-site residue.

Belongs to the prokaryotic AdoMetDC family. Type 1 subfamily. Heterooctamer of four alpha and four beta chains arranged as a tetramer of alpha/beta heterodimers. It depends on pyruvate as a cofactor. In terms of processing, is synthesized initially as an inactive proenzyme. Formation of the active enzyme involves a self-maturation process in which the active site pyruvoyl group is generated from an internal serine residue via an autocatalytic post-translational modification. Two non-identical subunits are generated from the proenzyme in this reaction, and the pyruvate is formed at the N-terminus of the alpha chain, which is derived from the carboxyl end of the proenzyme. The post-translation cleavage follows an unusual pathway, termed non-hydrolytic serinolysis, in which the side chain hydroxyl group of the serine supplies its oxygen atom to form the C-terminus of the beta chain, while the remainder of the serine residue undergoes an oxidative deamination to produce ammonia and the pyruvoyl group blocking the N-terminus of the alpha chain.

The catalysed reaction is L-arginine + H(+) = agmatine + CO2. It participates in amine and polyamine biosynthesis; agmatine biosynthesis; agmatine from L-arginine: step 1/1. Functionally, specifically catalyzes the decarboxylation of L-arginine to agmatine. Has no S-adenosylmethionine decarboxylase (AdoMetDC) activity. This Caldivirga maquilingensis (strain ATCC 700844 / DSM 13496 / JCM 10307 / IC-167) protein is Arginine decarboxylase proenzyme.